We begin with the raw amino-acid sequence, 346 residues long: Formimidoylglutamase (346 aa).

The Mn(2+) site is built by H145, D180, H182, D184, D271, and D273.

It belongs to the arginase family. Mn(2+) is required as a cofactor.

The catalysed reaction is N-formimidoyl-L-glutamate + H2O = formamide + L-glutamate. It participates in amino-acid degradation; L-histidine degradation into L-glutamate; L-glutamate from N-formimidoyl-L-glutamate (hydrolase route): step 1/1. In terms of biological role, catalyzes the conversion of N-formimidoyl-L-glutamate to L-glutamate and formamide. The protein is Formimidoylglutamase of Psychrobacter cryohalolentis (strain ATCC BAA-1226 / DSM 17306 / VKM B-2378 / K5).